The sequence spans 410 residues: Elongation factor Tu, chloroplastic (410 aa).

The region spanning lysine 10–glutamate 215 is the tr-type G domain. The G1 stretch occupies residues glycine 19 to threonine 26. Residue glycine 19–threonine 26 coordinates GTP. Threonine 26 lines the Mg(2+) pocket. The tract at residues glycine 61–asparagine 65 is G2. The interval aspartate 82–glycine 85 is G3. GTP is bound by residues aspartate 82–histidine 86 and asparagine 137–aspartate 140. The segment at asparagine 137–aspartate 140 is G4. Positions serine 175–leucine 177 are G5.

It belongs to the TRAFAC class translation factor GTPase superfamily. Classic translation factor GTPase family. EF-Tu/EF-1A subfamily.

It localises to the plastid. Its subcellular location is the chloroplast. The catalysed reaction is GTP + H2O = GDP + phosphate + H(+). In terms of biological role, GTP hydrolase that promotes the GTP-dependent binding of aminoacyl-tRNA to the A-site of ribosomes during protein biosynthesis. In Cyanidium caldarium (Red alga), this protein is Elongation factor Tu, chloroplastic (tufA).